Consider the following 62-residue polypeptide: Large ribosomal subunit protein uL30 (62 aa).

It belongs to the universal ribosomal protein uL30 family. In terms of assembly, part of the 50S ribosomal subunit.

The sequence is that of Large ribosomal subunit protein uL30 from Staphylococcus carnosus (strain TM300).